A 706-amino-acid chain; its full sequence is Elongation factor G (706 aa).

The tr-type G domain maps to 8–297 (ERVRNIGIAA…AVIDYLPAPT (290 aa)). GTP is bound by residues 17–24 (AHIDAGKT), 96–100 (DTPGH), and 150–153 (NKMD).

It belongs to the TRAFAC class translation factor GTPase superfamily. Classic translation factor GTPase family. EF-G/EF-2 subfamily.

The protein localises to the cytoplasm. Its function is as follows. Catalyzes the GTP-dependent ribosomal translocation step during translation elongation. During this step, the ribosome changes from the pre-translocational (PRE) to the post-translocational (POST) state as the newly formed A-site-bound peptidyl-tRNA and P-site-bound deacylated tRNA move to the P and E sites, respectively. Catalyzes the coordinated movement of the two tRNA molecules, the mRNA and conformational changes in the ribosome. This chain is Elongation factor G, found in Cyanothece sp. (strain PCC 7425 / ATCC 29141).